A 493-amino-acid chain; its full sequence is Cytochrome P450 2E1 (493 aa).

298-303 (FAGTET) lines the substrate pocket. Cysteine 437 serves as a coordination point for heme.

The protein belongs to the cytochrome P450 family. As to quaternary structure, interacts with chaperones HSP70 and HSP90; this interaction is required for initial targeting to mitochondria. Heme is required as a cofactor.

The protein localises to the endoplasmic reticulum membrane. Its subcellular location is the microsome membrane. It localises to the mitochondrion inner membrane. It catalyses the reaction an organic molecule + reduced [NADPH--hemoprotein reductase] + O2 = an alcohol + oxidized [NADPH--hemoprotein reductase] + H2O + H(+). The enzyme catalyses (5Z,8Z,11Z)-eicosatrienoate + reduced [NADPH--hemoprotein reductase] + O2 = 19-hydroxy-(5Z,8Z,11Z)-eicosatrienoate + oxidized [NADPH--hemoprotein reductase] + H2O + H(+). The catalysed reaction is (5Z,8Z,11Z,14Z,17Z)-eicosapentaenoate + reduced [NADPH--hemoprotein reductase] + O2 = 19-hydroxy-(5Z,8Z,11Z,14Z,17Z)-eicosapentaenoate + oxidized [NADPH--hemoprotein reductase] + H2O + H(+). It carries out the reaction (4Z,7Z,10Z,13Z,16Z,19Z)-docosahexaenoate + reduced [NADPH--hemoprotein reductase] + O2 = 21-hydroxy-(4Z,7Z,10Z,13Z,16Z,19Z)-docosahexaenoate + oxidized [NADPH--hemoprotein reductase] + H2O + H(+). It catalyses the reaction dodecanoate + reduced [NADPH--hemoprotein reductase] + O2 = 11-hydroxydodecanoate + oxidized [NADPH--hemoprotein reductase] + H2O + H(+). The enzyme catalyses tetradecanoate + reduced [NADPH--hemoprotein reductase] + O2 = 13-hydroxytetradecanoate + oxidized [NADPH--hemoprotein reductase] + H2O + H(+). The catalysed reaction is 4-nitrophenol + NADPH + O2 + H(+) = 4-nitrocatechol + NADP(+) + H2O. The protein operates within lipid metabolism; fatty acid metabolism. With respect to regulation, the omega-1 hydroxylase activity is stimulated by cytochrome b5. Its function is as follows. A cytochrome P450 monooxygenase involved in the metabolism of fatty acids. Mechanistically, uses molecular oxygen inserting one oxygen atom into a substrate, and reducing the second into a water molecule, with two electrons provided by NADPH via cytochrome P450 reductase (NADPH--hemoprotein reductase). Catalyzes the hydroxylation of carbon-hydrogen bonds. Hydroxylates fatty acids specifically at the omega-1 position displaying the highest catalytic activity for saturated fatty acids. May be involved in the oxidative metabolism of xenobiotics. In Macaca mulatta (Rhesus macaque), this protein is Cytochrome P450 2E1 (CYP2E1).